A 412-amino-acid chain; its full sequence is Argininosuccinate synthase (412 aa).

Residues 16-24 and A44 contribute to the ATP site; that span reads AYSGGLDTS. L-citrulline contacts are provided by Y96 and S101. Residue G126 participates in ATP binding. 3 residues coordinate L-aspartate: T128, N132, and D133. N132 lines the L-citrulline pocket. The L-citrulline site is built by R136, S185, S194, E270, and Y282.

This sequence belongs to the argininosuccinate synthase family. Type 1 subfamily. In terms of assembly, homotetramer.

It is found in the cytoplasm. It catalyses the reaction L-citrulline + L-aspartate + ATP = 2-(N(omega)-L-arginino)succinate + AMP + diphosphate + H(+). Its pathway is amino-acid biosynthesis; L-arginine biosynthesis; L-arginine from L-ornithine and carbamoyl phosphate: step 2/3. The sequence is that of Argininosuccinate synthase from Shewanella baltica (strain OS185).